The sequence spans 280 residues: Tryptophan synthase alpha chain (280 aa).

Catalysis depends on proton acceptor residues Glu-50 and Asp-61.

It belongs to the TrpA family. Tetramer of two alpha and two beta chains.

It catalyses the reaction (1S,2R)-1-C-(indol-3-yl)glycerol 3-phosphate + L-serine = D-glyceraldehyde 3-phosphate + L-tryptophan + H2O. It participates in amino-acid biosynthesis; L-tryptophan biosynthesis; L-tryptophan from chorismate: step 5/5. In terms of biological role, the alpha subunit is responsible for the aldol cleavage of indoleglycerol phosphate to indole and glyceraldehyde 3-phosphate. The polypeptide is Tryptophan synthase alpha chain (Methylorubrum extorquens (strain CM4 / NCIMB 13688) (Methylobacterium extorquens)).